The sequence spans 497 residues: Serine hydroxymethyltransferase (497 aa).

(6S)-5,6,7,8-tetrahydrofolate contacts are provided by residues L176 and 180 to 182 (GHL). Position 289 is an N6-(pyridoxal phosphate)lysine (K289). E306 contacts (6S)-5,6,7,8-tetrahydrofolate.

The protein belongs to the SHMT family. Homodimer. Requires pyridoxal 5'-phosphate as cofactor.

The protein localises to the cytoplasm. It catalyses the reaction (6R)-5,10-methylene-5,6,7,8-tetrahydrofolate + glycine + H2O = (6S)-5,6,7,8-tetrahydrofolate + L-serine. It functions in the pathway one-carbon metabolism; tetrahydrofolate interconversion. Its pathway is amino-acid biosynthesis; glycine biosynthesis; glycine from L-serine: step 1/1. In terms of biological role, catalyzes the reversible interconversion of serine and glycine with tetrahydrofolate (THF) serving as the one-carbon carrier. This reaction serves as the major source of one-carbon groups required for the biosynthesis of purines, thymidylate, methionine, and other important biomolecules. Also exhibits THF-independent aldolase activity toward beta-hydroxyamino acids, producing glycine and aldehydes, via a retro-aldol mechanism. The sequence is that of Serine hydroxymethyltransferase from Chlamydia pneumoniae (Chlamydophila pneumoniae).